The following is a 649-amino-acid chain: Acetyl-coenzyme A synthetase (649 aa).

CoA-binding positions include 191-194 (RGGR), Thr-311, and Asn-335. Residues 387-389 (GEP), 411-416 (DTWWQT), Asp-500, and Arg-515 contribute to the ATP site. Ser-523 serves as a coordination point for CoA. Arg-526 contacts ATP. Mg(2+) contacts are provided by Val-537, His-539, and Ile-542. Arg-584 is a binding site for CoA. Lys-609 carries the N6-acetyllysine modification.

The protein belongs to the ATP-dependent AMP-binding enzyme family. It depends on Mg(2+) as a cofactor. In terms of processing, acetylated. Deacetylation by the SIR2-homolog deacetylase activates the enzyme.

The enzyme catalyses acetate + ATP + CoA = acetyl-CoA + AMP + diphosphate. Its function is as follows. Catalyzes the conversion of acetate into acetyl-CoA (AcCoA), an essential intermediate at the junction of anabolic and catabolic pathways. AcsA undergoes a two-step reaction. In the first half reaction, AcsA combines acetate with ATP to form acetyl-adenylate (AcAMP) intermediate. In the second half reaction, it can then transfer the acetyl group from AcAMP to the sulfhydryl group of CoA, forming the product AcCoA. The polypeptide is Acetyl-coenzyme A synthetase (Psychromonas ingrahamii (strain DSM 17664 / CCUG 51855 / 37)).